The primary structure comprises 428 residues: Secernin-2 (428 aa).

Cysteine 10 is an active-site residue.

Belongs to the peptidase C69 family. Secernin subfamily.

The sequence is that of Secernin-2 (scrn2) from Xenopus laevis (African clawed frog).